Consider the following 119-residue polypeptide: Large ribosomal subunit protein bL20 (119 aa).

It belongs to the bacterial ribosomal protein bL20 family.

In terms of biological role, binds directly to 23S ribosomal RNA and is necessary for the in vitro assembly process of the 50S ribosomal subunit. It is not involved in the protein synthesizing functions of that subunit. The protein is Large ribosomal subunit protein bL20 of Levilactobacillus brevis (strain ATCC 367 / BCRC 12310 / CIP 105137 / JCM 1170 / LMG 11437 / NCIMB 947 / NCTC 947) (Lactobacillus brevis).